We begin with the raw amino-acid sequence, 698 residues long: Elongation factor G 1 (698 aa).

The region spanning 8–290 (ERYRNIGICA…AVVEFLPAPV (283 aa)) is the tr-type G domain. Residues 17-24 (AHVDAGKT), 88-92 (DTPGH), and 142-145 (NKMD) each bind GTP.

The protein belongs to the TRAFAC class translation factor GTPase superfamily. Classic translation factor GTPase family. EF-G/EF-2 subfamily.

The protein resides in the cytoplasm. Functionally, catalyzes the GTP-dependent ribosomal translocation step during translation elongation. During this step, the ribosome changes from the pre-translocational (PRE) to the post-translocational (POST) state as the newly formed A-site-bound peptidyl-tRNA and P-site-bound deacylated tRNA move to the P and E sites, respectively. Catalyzes the coordinated movement of the two tRNA molecules, the mRNA and conformational changes in the ribosome. This Shewanella oneidensis (strain ATCC 700550 / JCM 31522 / CIP 106686 / LMG 19005 / NCIMB 14063 / MR-1) protein is Elongation factor G 1.